The following is a 528-amino-acid chain: UDP-glucuronosyltransferase 2A2 (528 aa).

Positions 1 to 21 (MIKKVLQLLIFHLTLAEIVLS) are cleaved as a signal peptide. Residues 22–494 (GNVVVWPTDG…FQYHSLDVIG (473 aa)) are Extracellular-facing. N-linked (GlcNAc...) asparagine glycans are attached at residues Asn48 and Asn314. Residues 495 to 515 (FLLACVASAILLVAKCCLFIF) traverse the membrane as a helical segment. Residues 516-528 (QKVGKTGKKKKRD) are Cytoplasmic-facing.

This sequence belongs to the UDP-glycosyltransferase family.

It is found in the membrane. It carries out the reaction glucuronate acceptor + UDP-alpha-D-glucuronate = acceptor beta-D-glucuronoside + UDP + H(+). The catalysed reaction is 17alpha-estradiol + UDP-alpha-D-glucuronate = 17alpha-estradiol 3-O-(beta-D-glucuronate) + UDP + H(+). It catalyses the reaction 17beta-estradiol + UDP-alpha-D-glucuronate = 17beta-estradiol 3-O-(beta-D-glucuronate) + UDP + H(+). The enzyme catalyses chenodeoxycholate + UDP-alpha-D-glucuronate = chenodeoxycholoyl-24-O-(beta-D-glucuronate) + UDP. It carries out the reaction lithocholate + UDP-alpha-D-glucuronate = lithocholoyl-24-O-(beta-D-glucuronate) + UDP. The catalysed reaction is deoxycholate + UDP-alpha-D-glucuronate = deoxycholoyl-24-O-(beta-D-glucuronate) + UDP. It catalyses the reaction hyocholate + UDP-alpha-D-glucuronate = hyocholoyl-24-O-(beta-D-glucuronate) + UDP. The enzyme catalyses hyodeoxycholate + UDP-alpha-D-glucuronate = hyodeoxycholate 6-O-(beta-D-glucuronate) + UDP + H(+). Functionally, UDP-glucuronosyltransferase (UGT) that catalyzes phase II biotransformation reactions in which lipophilic substrates are conjugated with glucuronic acid to increase the metabolite's water solubility, thereby facilitating excretion into either the urine or bile. Essential for the elimination and detoxification of drugs, xenobiotics and endogenous compounds. Catalyzes the glucuronidation of endogenous estrogen hormone estradiol. Contributes to bile acid (BA) detoxification by catalyzing the glucuronidation of BA substrates, which are natural detergents for dietary lipids absorption. Potential role in detoxification of toxic waste compounds in the amniotic fluid before birth, and air-born chemical after birth. In Mus musculus (Mouse), this protein is UDP-glucuronosyltransferase 2A2.